The sequence spans 252 residues: 5-oxoprolinase subunit A (252 aa).

Belongs to the LamB/PxpA family. In terms of assembly, forms a complex composed of PxpA, PxpB and PxpC.

The enzyme catalyses 5-oxo-L-proline + ATP + 2 H2O = L-glutamate + ADP + phosphate + H(+). In terms of biological role, catalyzes the cleavage of 5-oxoproline to form L-glutamate coupled to the hydrolysis of ATP to ADP and inorganic phosphate. This is 5-oxoprolinase subunit A from Bacillus cytotoxicus (strain DSM 22905 / CIP 110041 / 391-98 / NVH 391-98).